A 608-amino-acid polypeptide reads, in one-letter code: Thiol:disulfide interchange protein DsbD (608 aa).

The N-terminal stretch at 1 to 22 is a signal peptide; it reads MKNLLSLCFLMLAAFTLNPAAA. C135 and C141 are joined by a disulfide. The span at 161-173 shows a compositional bias: polar residues; sequence SAPSSDAAQQTNE. The disordered stretch occupies residues 161 to 180; that stretch reads SAPSSDAAQQTNEGEVKKSE. 8 helical membrane passes run 194–214, 241–261, 273–293, 314–334, 352–372, 387–407, 414–434, and 456–476; these read LLTLIAFFVGGLLLSFTPCVF, FFYVQGMAITYTLLGVVVAMA, IVLIGLSILFIFLALSMFGVF, GGSITGVLMMGVISGLVASPC, VVLGASALYALSLGMGLPLLI, WMNIIKNIFGLLLLAVPVFLL, VASQALWALLILVSASYFYVA, and SLVIFLMLFFGANLAYQLIYP. Cysteines 212 and 334 form a disulfide. One can recognise a Thioredoxin domain in the interval 469 to 608; it reads LAYQLIYPSS…FSAHVKSIFK (140 aa). C522 and C525 are oxidised to a cystine.

Belongs to the thioredoxin family. DsbD subfamily.

It localises to the cell inner membrane. It carries out the reaction [protein]-dithiol + NAD(+) = [protein]-disulfide + NADH + H(+). The catalysed reaction is [protein]-dithiol + NADP(+) = [protein]-disulfide + NADPH + H(+). Required to facilitate the formation of correct disulfide bonds in some periplasmic proteins and for the assembly of the periplasmic c-type cytochromes. Acts by transferring electrons from cytoplasmic thioredoxin to the periplasm. This transfer involves a cascade of disulfide bond formation and reduction steps. In Colwellia psychrerythraea (strain 34H / ATCC BAA-681) (Vibrio psychroerythus), this protein is Thiol:disulfide interchange protein DsbD.